The following is a 798-amino-acid chain: Integrin beta-1 (798 aa).

The signal sequence occupies residues 1-20 (MNLQLIFWIGLISSVCCVFG). Topologically, residues 21 to 728 (QADEDRCLKA…ETPECPTGPD (708 aa)) are extracellular. The region spanning 26–76 (RCLKANAKSCGECIQAGPNCGWCTNSTFLQEGMPTSARCDDLEALKKKGCH) is the PSI domain. 28 disulfides stabilise this stretch: Cys27–Cys45, Cys35–Cys464, Cys38–Cys64, Cys48–Cys75, Cys207–Cys213, Cys261–Cys301, Cys401–Cys415, Cys435–Cys462, Cys466–Cys486, Cys477–Cys489, Cys491–Cys500, Cys502–Cys533, Cys516–Cys531, Cys525–Cys536, Cys538–Cys553, Cys555–Cys576, Cys560–Cys574, Cys568–Cys579, Cys581–Cys590, Cys592–Cys615, Cys599–Cys613, Cys607–Cys618, Cys620–Cys630, Cys633–Cys636, Cys640–Cys691, Cys646–Cys665, Cys649–Cys661, and Cys699–Cys723. Residues 75 to 91 (CHPNDTENPRGSKDIKK) are compositionally biased toward basic and acidic residues. A disordered region spans residues 75-105 (CHPNDTENPRGSKDIKKNKNVTNRSKGTAEK). Asn94 and Asn97 each carry an N-linked (GlcNAc...) asparagine glycan. In terms of domain architecture, VWFA spans 140-378 (DYPIDLYYLM…QLIIDAYNSL (239 aa)). 2 residues coordinate Mg(2+): Ser152 and Ser154. Ca(2+)-binding residues include Ser154, Asp157, Asp158, and Glu189. The segment at 207–213 (CTNEQNC) is CX3CL1-binding. Asn212 carries N-linked (GlcNAc...) asparagine glycosylation. Asn244, Asp246, Pro248, and Glu249 together coordinate Ca(2+). Glu249 contacts Mg(2+). Asn269 carries an N-linked (GlcNAc...) asparagine glycan. The interval 295 to 314 (LPNDGQCHLKNDVYTMSHYY) is CX3CL1-binding. Ala362 contacts Ca(2+). An interaction with TMEM182 region spans residues 383 to 465 (ILENSKLPEG…IILQFICECE (83 aa)). N-linked (GlcNAc...) asparagine glycosylation is found at Asn406 and Asn417. I-EGF domains are found at residues 466–501 (CQGE…RHCE), 502–554 (CSTD…KFCE), 555–591 (CDNF…SACD), and 592–631 (CSLD…PTCE). Asn481 is a glycosylation site (N-linked (GlcNAc...) asparagine). A glycan (N-linked (GlcNAc...) asparagine) is linked at Asn520. Residue Asn584 is glycosylated (N-linked (GlcNAc...) asparagine). Residue Asn669 is glycosylated (N-linked (GlcNAc...) asparagine). A helical transmembrane segment spans residues 729-749 (IIPIVAGVVAGIVLIGLALLL). The Cytoplasmic segment spans residues 750–798 (IWKLLMIIHDRREFAKFEKERMNAKWDTGENPIYKSAVTTVVNPKYEGK). The tract at residues 762 to 767 (EFAKFE) is signal for sorting from recycling endosomes; interaction with ACAP1. A Phosphothreonine modification is found at Thr777. Tyr783 carries the post-translational modification Phosphotyrosine. Ser785 is modified (phosphoserine). The segment at 785–792 (SAVTTVVN) is interaction with ITGB1BP1. Position 789 is a phosphothreonine (Thr789). Residue Lys794 is modified to N6-acetyllysine; alternate. Lys794 is covalently cross-linked (Glycyl lysine isopeptide (Lys-Gly) (interchain with G-Cter in SUMO1); alternate).

It belongs to the integrin beta chain family. Interacts with seprase FAP (seprase); the interaction occurs at the cell surface of invadopodia membrane in a collagen-dependent manner. Heterodimer of an alpha and a beta subunit. Beta-1 associates with either alpha-1, alpha-2, alpha-3, alpha-4, alpha-5, alpha-6, alpha-7, alpha-8, alpha-9, alpha-10, alpha-11 or alpha-V. ITGA6:ITGB1 is found in a complex with CD9; interaction takes place in oocytes and is involved in sperm-egg fusion. Binds LGALS3BP and NMRK2, when associated with alpha-7, but not with alpha-5. Interacts with FLNA, FLNB, FLNC and RANBP9. Interacts with KRT1 in the presence of RACK1 and SRC. Interacts with JAML; integrin alpha-4/beta-1 may regulate leukocyte to endothelial cells adhesion by controlling JAML homodimerization. Interacts with RAB21. Interacts (via the cytoplasmic region) with RAB25 (via the hypervariable C-terminal region). Interacts with MYO10. Interacts with ITGB1BP1 (via C-terminal region); the interaction is a prerequisite for focal adhesion disassembly. Interacts with TLN1; the interaction is prevented by competitive binding of ITGB1BP1. Interacts with ACAP1; required for ITGB1 recycling. Interacts with ASAP3. Interacts with FERMT2; the interaction is inhibited in presence of ITGB1BP1. Interacts with DAB2. Interacts with FGR and HCK. Interacts with alpha-7A and alpha-7B in adult skeletal muscle. Interacts with alpha-7B in cardiomyocytes of adult heart. Interacts with EMP2; the interaction may be direct or indirect and ITGB1 has a heterodimer form. ITGA5:ITGB1 interacts with CCN3. ITGA4:ITGB1 is found in a ternary complex with CX3CR1 and CX3CL1. ITGA5:ITGB1 interacts with FBN1. ITGA5:ITGB1 acts as a receptor for fibronectin FN1 and mediates R-G-D-dependent cell adhesion to FN1. ITGA5:ITGB1 interacts with IL1B. Interacts with MDK. ITGA4:ITGB1 interacts with MDK; this interaction mediates MDK-induced osteoblast cells migration through PXN phosphorylation. ITGA6:ITGB1 interacts with MDK; this interaction mediates MDK-induced neurite-outgrowth. ITGA5:ITGB1 interacts with ACE2. Interacts with TMEM182 and LAMB1. Interacts with tensin TNS3; TNS3 also interacts with PEAK1, thus acting as an adapter molecule to bridge the association of PEAK1 with ITGB1. Interacts with tensin TNS4; the interaction displaces tensin TNS3 from the ITGB1 cytoplasmic tail and promotes ITGB1 stability. Integrin ITGA9:ITGB1 interacts with SPP1/OPN (via N-terminus). Integrin ITGA9:ITGB1 interacts with TNC/TNFN3 (via the 3rd Fibronectin type-III domain). Integrins ITGA4:ITGB1 and ITGA9:ITGB1 interact with SVEP1 (via Sushi domain 21); thereby inhibit Ca(2+) intracellular signaling and as a result repress vasocontraction. ITGA4:ITGB1 and ITGA5:ITGB1 interacts with SELP. Interacts with CD248. ITGA5:ITGB1 interacts with IGFBP1. ITGA4:ITGB1 interacts with BCAM. Interacts with ADGRG6.

It is found in the cell membrane. It localises to the cell projection. Its subcellular location is the invadopodium membrane. The protein localises to the ruffle membrane. The protein resides in the recycling endosome. It is found in the melanosome. It localises to the cell junction. Its subcellular location is the focal adhesion. The protein localises to the lamellipodium. The protein resides in the ruffle. In terms of biological role, integrins alpha-1/beta-1, alpha-2/beta-1, alpha-10/beta-1 and alpha-11/beta-1 are receptors for collagen. Integrins alpha-1/beta-1 and alpha-2/beta-2 recognize the proline-hydroxylated sequence G-F-P-G-E-R in collagen. Integrins alpha-2/beta-1, alpha-3/beta-1, alpha-4/beta-1, alpha-5/beta-1, alpha-8/beta-1, alpha-10/beta-1, alpha-11/beta-1 and alpha-V/beta-1 are receptors for fibronectin. Alpha-4/beta-1 recognizes one or more domains within the alternatively spliced CS-1 and CS-5 regions of fibronectin. Integrin alpha-5/beta-1 is a receptor for fibrinogen. Integrin alpha-1/beta-1, alpha-2/beta-1, alpha-6/beta-1 and alpha-7/beta-1 are receptors for lamimin. Integrin alpha-6/beta-1 (ITGA6:ITGB1) is present in oocytes and is involved in sperm-egg fusion. Integrin alpha-4/beta-1 is a receptor for VCAM1 and recognizes the sequence Q-I-D-S in VCAM1. Integrin alpha-9/beta-1 is a receptor for VCAM1, cytotactin and osteopontin. It recognizes the sequence A-E-I-D-G-I-E-L in cytotactin. Integrin alpha-3/beta-1 is a receptor for epiligrin, thrombospondin and CSPG4. Integrin alpha-3/beta-1 provides a docking site for FAP (seprase) at invadopodia plasma membranes in a collagen-dependent manner and hence may participate in the adhesion, formation of invadopodia and matrix degradation processes, promoting cell invasion. Alpha-3/beta-1 may mediate with LGALS3 the stimulation by CSPG4 of endothelial cells migration. Integrin alpha-V/beta-1 is a receptor for vitronectin. Beta-1 integrins recognize the sequence R-G-D in a wide array of ligands. When associated with alpha-7/beta-1 integrin, regulates cell adhesion and laminin matrix deposition. Involved in promoting endothelial cell motility and angiogenesis. Involved in osteoblast compaction through the fibronectin fibrillogenesis cell-mediated matrix assembly process and the formation of mineralized bone nodules. May be involved in up-regulation of the activity of kinases such as PKC via binding to KRT1. Together with KRT1 and RACK1, serves as a platform for SRC activation or inactivation. Plays a mechanistic adhesive role during telophase, required for the successful completion of cytokinesis. ITGA4:ITGB1 binds to fractalkine (CX3CL1) and may act as its coreceptor in CX3CR1-dependent fractalkine signaling. ITGA4:ITGB1 and ITGA5:ITGB1 bind to PLA2G2A via a site (site 2) which is distinct from the classical ligand-binding site (site 1) and this induces integrin conformational changes and enhanced ligand binding to site 1. ITGA5:ITGB1 acts as a receptor for fibrillin-1 (FBN1) and mediates R-G-D-dependent cell adhesion to FBN1. ITGA5:ITGB1 is a receptor for IL1B and binding is essential for IL1B signaling. ITGA5:ITGB3 is a receptor for soluble CD40LG and is required for CD40/CD40LG signaling. Plays an important role in myoblast differentiation and fusion during skeletal myogenesis. ITGA9:ITGB1 may play a crucial role in SVEP1/polydom-mediated myoblast cell adhesion. Integrins ITGA9:ITGB1 and ITGA4:ITGB1 repress PRKCA-mediated L-type voltage-gated channel Ca(2+) influx and ROCK-mediated calcium sensitivity in vascular smooth muscle cells via their interaction with SVEP1, thereby inhibit vasocontraction. The protein is Integrin beta-1 of Camelus bactrianus (Bactrian camel).